The primary structure comprises 525 residues: GMP synthase [glutamine-hydrolyzing] (525 aa).

Positions 9–207 (RILILDFGSQ…VQDICGCEAL (199 aa)) constitute a Glutamine amidotransferase type-1 domain. The Nucleophile role is filled by Cys86. Residues His181 and Glu183 contribute to the active site. One can recognise a GMPS ATP-PPase domain in the interval 208 to 400 (WTASNIVEDA…LGLPYDMVYR (193 aa)). 235-241 (SGGVDSS) contributes to the ATP binding site.

Homodimer.

The catalysed reaction is XMP + L-glutamine + ATP + H2O = GMP + L-glutamate + AMP + diphosphate + 2 H(+). The protein operates within purine metabolism; GMP biosynthesis; GMP from XMP (L-Gln route): step 1/1. Functionally, catalyzes the synthesis of GMP from XMP. The protein is GMP synthase [glutamine-hydrolyzing] of Pseudomonas entomophila (strain L48).